The following is a 389-amino-acid chain: Nicotinate phosphoribosyltransferase (389 aa).

A Phosphohistidine; by autocatalysis modification is found at histidine 216.

The protein belongs to the NAPRTase family. Transiently phosphorylated on a His residue during the reaction cycle. Phosphorylation strongly increases the affinity for substrates and increases the rate of nicotinate D-ribonucleotide production. Dephosphorylation regenerates the low-affinity form of the enzyme, leading to product release.

It catalyses the reaction nicotinate + 5-phospho-alpha-D-ribose 1-diphosphate + ATP + H2O = nicotinate beta-D-ribonucleotide + ADP + phosphate + diphosphate. It functions in the pathway cofactor biosynthesis; NAD(+) biosynthesis; nicotinate D-ribonucleotide from nicotinate: step 1/1. Its function is as follows. Catalyzes the synthesis of beta-nicotinate D-ribonucleotide from nicotinate and 5-phospho-D-ribose 1-phosphate at the expense of ATP. This is Nicotinate phosphoribosyltransferase from Ralstonia nicotianae (strain ATCC BAA-1114 / GMI1000) (Ralstonia solanacearum).